The chain runs to 49 residues: Large ribosomal subunit protein bL33B (49 aa).

Belongs to the bacterial ribosomal protein bL33 family.

This Oceanobacillus iheyensis (strain DSM 14371 / CIP 107618 / JCM 11309 / KCTC 3954 / HTE831) protein is Large ribosomal subunit protein bL33B.